Reading from the N-terminus, the 579-residue chain is Threonylcarbamoyladenosine tRNA methylthiotransferase (579 aa).

At serine 53 the chain carries Phosphoserine. Residues 64-172 (QKIWIRTWGC…VVEVVEETIK (109 aa)) form the MTTase N-terminal domain. [4Fe-4S] cluster contacts are provided by cysteine 73 and cysteine 109. Position 122 is a phosphoserine (serine 122). The [4Fe-4S] cluster site is built by cysteine 138, cysteine 214, cysteine 218, and cysteine 221. The region spanning 200-431 (RKNPLIEIIS…RVFHSYSPYD (232 aa)) is the Radical SAM core domain. The region spanning 431 to 493 (DHKIGERQQV…KHFMKGQPVS (63 aa)) is the TRAM domain. Threonine 499 is subject to Phosphothreonine. Residues 556–578 (CALRMSVGLALLGLLFAFFVKVY) traverse the membrane as a helical segment.

It belongs to the methylthiotransferase family. CDKAL1 subfamily. The cofactor is [4Fe-4S] cluster. Expressed in pancreatic islets.

Its subcellular location is the endoplasmic reticulum membrane. It catalyses the reaction N(6)-L-threonylcarbamoyladenosine(37) in tRNA + (sulfur carrier)-SH + AH2 + 2 S-adenosyl-L-methionine = 2-methylsulfanyl-N(6)-L-threonylcarbamoyladenosine(37) in tRNA + (sulfur carrier)-H + 5'-deoxyadenosine + L-methionine + A + S-adenosyl-L-homocysteine + 2 H(+). Its function is as follows. Catalyzes the methylthiolation of N6-threonylcarbamoyladenosine (t(6)A), leading to the formation of 2-methylthio-N6-threonylcarbamoyladenosine (ms(2)t(6)A) at position 37 in tRNAs that read codons beginning with adenine. The sequence is that of Threonylcarbamoyladenosine tRNA methylthiotransferase (CDKAL1) from Homo sapiens (Human).